The sequence spans 71 residues: Large ribosomal subunit protein uL29 (71 aa).

This sequence belongs to the universal ribosomal protein uL29 family.

This chain is Large ribosomal subunit protein uL29, found in Roseiflexus sp. (strain RS-1).